The sequence spans 83 residues: uncharacterized protein (83 aa).

A disordered region spans residues 1–83 (MCWKPKVKVP…KSSIRSKAFG (83 aa)). The span at 43 to 55 (SVSSSEVPTTPSS) shows a compositional bias: low complexity.

This is an uncharacterized protein from Enterobacteria phage T3 (Bacteriophage T3).